The following is a 755-amino-acid chain: ABC transporter G family member 2 (755 aa).

The region spanning 98–358 is the ABC transporter domain; it reads LSFTDLTYSV…FSEFKHPIPE (261 aa). ATP is bound at residue 151–158; it reads GASGSGKS. Residues 449-659 form the ABC transmembrane type-2 domain; that stretch reads IEMIVIGKRA…PYEGVLQNEF (211 aa). Transmembrane regions (helical) follow at residues 468–488, 503–523, 552–572, 579–599, 609–629, and 728–748; these read LLGM…TMFT, FFAF…PVFL, IPAL…AVGL, FFFF…FVTF, LGFT…GFFI, and LWIT…TLLI.

It belongs to the ABC transporter superfamily. ABCG family. Eye pigment precursor importer (TC 3.A.1.204) subfamily.

Its subcellular location is the membrane. This Arabidopsis thaliana (Mouse-ear cress) protein is ABC transporter G family member 2 (ABCG2).